A 307-amino-acid chain; its full sequence is Nodulation protein NoeC (307 aa).

8 consecutive transmembrane segments (helical) span residues 46 to 66 (APLW…YVLN), 91 to 111 (SGLT…VCAI), 117 to 137 (LFAI…KVRG), 140 to 160 (VLDL…GATA), 163 to 183 (IPVP…LASI), 212 to 232 (IVAL…ELFV), 238 to 258 (AQGP…AYWI), and 279 to 299 (VTDG…VFLM).

The protein localises to the cell membrane. In Azorhizobium caulinodans (strain ATCC 43989 / DSM 5975 / JCM 20966 / LMG 6465 / NBRC 14845 / NCIMB 13405 / ORS 571), this protein is Nodulation protein NoeC (noeC).